A 310-amino-acid chain; its full sequence is Repression factor of MSEs protein 1 (310 aa).

Disordered regions lie at residues 83-155 and 192-230; these read TQEV…EANA and DGIR…DEGE. Over residues 92–106 the composition is skewed to low complexity; sequence RNTSSSSSSTRSNSS. Polar residues predominate over residues 107–120; sequence ADISDTEYSGENTP. Over residues 127–136 the composition is skewed to basic residues; that stretch reads SRRRRTRSRA. Residues 139–155 are compositionally biased toward polar residues; that stretch reads RENSLPASLPSISEANA. Residues 192-208 show a composition bias toward basic and acidic residues; it reads DGIRRRSSRISERDKRR. S215 carries the phosphoserine modification.

In terms of assembly, interacts directly with HST1 and SUM1. Required for the interaction between HST1 and SUM1.

It is found in the nucleus. Functionally, tethering factor required for histone deacetylase HST1-mediated repression. Probably involved in targeting HST1 to a subset of SUM1-regulated genes. The sequence is that of Repression factor of MSEs protein 1 (RFM1) from Saccharomyces cerevisiae (strain ATCC 204508 / S288c) (Baker's yeast).